The sequence spans 237 residues: Large ribosomal subunit protein uL1 (237 aa).

Belongs to the universal ribosomal protein uL1 family. Part of the 50S ribosomal subunit.

Binds directly to 23S rRNA. The L1 stalk is quite mobile in the ribosome, and is involved in E site tRNA release. Its function is as follows. Protein L1 is also a translational repressor protein, it controls the translation of the L11 operon by binding to its mRNA. This Synechococcus sp. (strain ATCC 27144 / PCC 6301 / SAUG 1402/1) (Anacystis nidulans) protein is Large ribosomal subunit protein uL1.